Consider the following 120-residue polypeptide: Large ribosomal subunit protein bL19 (120 aa).

This sequence belongs to the bacterial ribosomal protein bL19 family.

Functionally, this protein is located at the 30S-50S ribosomal subunit interface and may play a role in the structure and function of the aminoacyl-tRNA binding site. This is Large ribosomal subunit protein bL19 from Thermosynechococcus vestitus (strain NIES-2133 / IAM M-273 / BP-1).